We begin with the raw amino-acid sequence, 207 residues long: LexA repressor (207 aa).

The segment at residues 28–48 (RAEIARRLGFKSPNAAEEHLK) is a DNA-binding region (H-T-H motif). Active-site for autocatalytic cleavage activity residues include Ser126 and Lys163.

Belongs to the peptidase S24 family. Homodimer.

It carries out the reaction Hydrolysis of Ala-|-Gly bond in repressor LexA.. Its function is as follows. Represses a number of genes involved in the response to DNA damage (SOS response), including recA and lexA. In the presence of single-stranded DNA, RecA interacts with LexA causing an autocatalytic cleavage which disrupts the DNA-binding part of LexA, leading to derepression of the SOS regulon and eventually DNA repair. The polypeptide is LexA repressor (Marinomonas sp. (strain MWYL1)).